The sequence spans 436 residues: ATP-dependent protease ATPase subunit HslU (436 aa).

ATP-binding positions include I18, G60 to E65, D249, E314, and R386.

It belongs to the ClpX chaperone family. HslU subfamily. A double ring-shaped homohexamer of HslV is capped on each side by a ring-shaped HslU homohexamer. The assembly of the HslU/HslV complex is dependent on binding of ATP.

The protein localises to the cytoplasm. Functionally, ATPase subunit of a proteasome-like degradation complex; this subunit has chaperone activity. The binding of ATP and its subsequent hydrolysis by HslU are essential for unfolding of protein substrates subsequently hydrolyzed by HslV. HslU recognizes the N-terminal part of its protein substrates and unfolds these before they are guided to HslV for hydrolysis. The chain is ATP-dependent protease ATPase subunit HslU from Chelativorans sp. (strain BNC1).